The sequence spans 374 residues: Glutamate 5-kinase (374 aa).

Lysine 9 serves as a coordination point for ATP. Substrate contacts are provided by serine 49, aspartate 136, and asparagine 148. ATP-binding positions include 168-169 (TD) and 210-216 (TGGMKSK). The region spanning 276–354 (SGVVRIDQGA…DEAKQLIPLV (79 aa)) is the PUA domain.

It belongs to the glutamate 5-kinase family.

The protein localises to the cytoplasm. It catalyses the reaction L-glutamate + ATP = L-glutamyl 5-phosphate + ADP. It functions in the pathway amino-acid biosynthesis; L-proline biosynthesis; L-glutamate 5-semialdehyde from L-glutamate: step 1/2. Catalyzes the transfer of a phosphate group to glutamate to form L-glutamate 5-phosphate. In Halalkalibacterium halodurans (strain ATCC BAA-125 / DSM 18197 / FERM 7344 / JCM 9153 / C-125) (Bacillus halodurans), this protein is Glutamate 5-kinase.